Reading from the N-terminus, the 485-residue chain is Cytoplasmic tRNA 2-thiolation protein 2 (485 aa).

It belongs to the CTU2/NCS2 family.

It localises to the cytoplasm. It participates in tRNA modification; 5-methoxycarbonylmethyl-2-thiouridine-tRNA biosynthesis. In terms of biological role, plays a central role in 2-thiolation of mcm(5)S(2)U at tRNA wobble positions of tRNA(Lys), tRNA(Glu) and tRNA(Gln). May act by forming a heterodimer with NCS6 that ligates sulfur from thiocarboxylated URM1 onto the uridine of tRNAs at wobble position. Prior mcm(5) tRNA modification by the elongator complex is required for 2-thiolation. May also be involved in protein urmylation. In Vanderwaltozyma polyspora (strain ATCC 22028 / DSM 70294 / BCRC 21397 / CBS 2163 / NBRC 10782 / NRRL Y-8283 / UCD 57-17) (Kluyveromyces polysporus), this protein is Cytoplasmic tRNA 2-thiolation protein 2.